Here is a 309-residue protein sequence, read N- to C-terminus: Taste receptor type 2 member 31 (309 aa).

Topologically, residues 1 to 2 (MT) are extracellular. The helical transmembrane segment at 3–23 (TFIPIIFSSVVVVLFVIGNFA) threads the bilayer. Residues 24 to 55 (NGFIALVNSIERVKRQKISFADQILTALAVSR) are Cytoplasmic-facing. A helical membrane pass occupies residues 56-76 (VGLLWVLLLNWYSTVFNPAFY). Topologically, residues 77–100 (SVEVRTTAYNVWAVTGHFSNWLAT) are extracellular. The helical transmembrane segment at 101–121 (SLSIFYLLKIANFSNLIFLHL) threads the bilayer. Residues 122-126 (KRRVK) lie on the Cytoplasmic side of the membrane. A helical membrane pass occupies residues 127–147 (SVILVMLLGPLLFLACQLFVI). Residues 148-181 (NMKEIVRTKEYEGNLTWKIKLRSAVYLSDATVTT) lie on the Extracellular side of the membrane. An N-linked (GlcNAc...) asparagine glycan is attached at asparagine 161. Residues 182 to 202 (LGNLVPFTLTLLCFLLLICSL) traverse the membrane as a helical segment. Topologically, residues 203-229 (CKHLKKMQLHGKGSQDPSTKVHIKALQ) are cytoplasmic. A helical transmembrane segment spans residues 230 to 250 (TVIFFLLLCAVYFLSIMISVW). Topologically, residues 251 to 259 (SFGSLENKP) are extracellular. The helical transmembrane segment at 260 to 280 (VFMFCKAIRFSYPSIHPFILI) threads the bilayer. Residues 281–309 (WGNKKLKQTFLSVLRQVRYWVKGEKPSSP) lie on the Cytoplasmic side of the membrane.

Belongs to the G-protein coupled receptor T2R family. Expressed in subsets of taste receptor cells of the tongue and exclusively in gustducin-positive cells.

It is found in the membrane. In terms of biological role, receptor that may play a role in the perception of bitterness and is gustducin-linked. May play a role in sensing the chemical composition of the gastrointestinal content. The activity of this receptor may stimulate alpha gustducin, mediate PLC-beta-2 activation and lead to the gating of TRPM5. Activated by the sulfonyl amide sweeteners saccharin and acesulfame K. This is Taste receptor type 2 member 31 (TAS2R31) from Homo sapiens (Human).